Here is a 54-residue protein sequence, read N- to C-terminus: MKTFKEFIKEDMVAGDSGGNPENISIGTTSGAVVNKGPEQIPKKKKEESKEKEE.

Residues 13 to 54 (VAGDSGGNPENISIGTTSGAVVNKGPEQIPKKKKEESKEKEE) form a disordered region. Over residues 20–32 (NPENISIGTTSGA) the composition is skewed to polar residues. A compositionally biased stretch (basic and acidic residues) spans 41 to 54 (IPKKKKEESKEKEE).

This is an uncharacterized protein from Enterobacteria phage T4 (Bacteriophage T4).